Here is a 460-residue protein sequence, read N- to C-terminus: tRNA (guanine(37)-N(1))-methyltransferase (460 aa).

S-adenosyl-L-methionine contacts are provided by residues histidine 204, 243–244, 271–272, and asparagine 292; these read DL and DA. Over residues 390–428 the composition is skewed to low complexity; that stretch reads ASTTTTPTTSNTNTSTTTSTTSTSTTTTESTNTNNSANN. A disordered region spans residues 390 to 460; that stretch reads ASTTTTPTTS…SIDTNKKLKN (71 aa). Residues 442–451 show a composition bias toward acidic residues; it reads DSNETNETDS.

The protein belongs to the class I-like SAM-binding methyltransferase superfamily. TRM5/TYW2 family. As to quaternary structure, monomer.

Its subcellular location is the mitochondrion matrix. It is found in the nucleus. The protein localises to the cytoplasm. The catalysed reaction is guanosine(37) in tRNA + S-adenosyl-L-methionine = N(1)-methylguanosine(37) in tRNA + S-adenosyl-L-homocysteine + H(+). In terms of biological role, specifically methylates the N1 position of guanosine-37 in various cytoplasmic and mitochondrial tRNAs. Methylation is not dependent on the nature of the nucleoside 5' of the target nucleoside. This is the first step in the biosynthesis of wybutosine (yW), a modified base adjacent to the anticodon of tRNAs and required for accurate decoding. The sequence is that of tRNA (guanine(37)-N(1))-methyltransferase (trmt5) from Dictyostelium discoideum (Social amoeba).